Here is a 367-residue protein sequence, read N- to C-terminus: Phosphoribosylaminoimidazole-succinocarboxamide synthase (367 aa).

Belongs to the SAICAR synthetase family.

The enzyme catalyses 5-amino-1-(5-phospho-D-ribosyl)imidazole-4-carboxylate + L-aspartate + ATP = (2S)-2-[5-amino-1-(5-phospho-beta-D-ribosyl)imidazole-4-carboxamido]succinate + ADP + phosphate + 2 H(+). It functions in the pathway purine metabolism; IMP biosynthesis via de novo pathway; 5-amino-1-(5-phospho-D-ribosyl)imidazole-4-carboxamide from 5-amino-1-(5-phospho-D-ribosyl)imidazole-4-carboxylate: step 1/2. The polypeptide is Phosphoribosylaminoimidazole-succinocarboxamide synthase (Shewanella amazonensis (strain ATCC BAA-1098 / SB2B)).